Reading from the N-terminus, the 367-residue chain is DNA replication and repair protein RecF (367 aa).

Position 30–37 (30–37 (GNNGEGKT)) interacts with ATP.

It belongs to the RecF family.

The protein resides in the cytoplasm. Functionally, the RecF protein is involved in DNA metabolism; it is required for DNA replication and normal SOS inducibility. RecF binds preferentially to single-stranded, linear DNA. It also seems to bind ATP. The protein is DNA replication and repair protein RecF of Leptospira biflexa serovar Patoc (strain Patoc 1 / Ames).